Consider the following 64-residue polypeptide: uncharacterized protein (64 aa).

This is an uncharacterized protein from Escherichia phage lambda (Bacteriophage lambda).